A 182-amino-acid polypeptide reads, in one-letter code: MEGETAAKAAASSSSSPSRYESQKRRDWNTFLQYLRNHKPPLNLSRCSGAHVLEFLKYLDQFGKTKVHATACPFFGQPNPPSQCTCPLKQAWGSLDALIGRLRAAFEEIGGGLPESNPFAAKAVRIYLKEVRQTQAKARGIPYDKKKRKRPHTDTATPIAGDGDDAEGSGGAALVVTAATTV.

Positions 1–16 are enriched in low complexity; sequence MEGETAAKAAASSSSS. Disordered stretches follow at residues 1 to 22 and 138 to 168; these read MEGETAAKAAASSSSSPSRYES and ARGIPYDKKKRKRPHTDTATPIAGDGDDAEG. Residues 19–147 form the ALOG domain; it reads RYESQKRRDW…ARGIPYDKKK (129 aa). The Nuclear localization signal signature appears at 145–149; that stretch reads KKKRK.

This sequence belongs to the plant homeotic and developmental regulators ALOG protein family.

Its subcellular location is the nucleus. Its function is as follows. Probable transcription regulator that acts as a developmental regulator by promoting cell growth in response to light. The chain is Protein LIGHT-DEPENDENT SHORT HYPOCOTYLS 5 (LSH5) from Arabidopsis thaliana (Mouse-ear cress).